A 211-amino-acid chain; its full sequence is MKYQLDTREARVIGCMLEKQITTPDQYPMSLNGITTACNQKTNREPVMELSESEVQQTLDLLVKKHFLRTLSGFGNRVVKYEHRFCNSEFGDLKLSPAEVALVTTLLLRGPQTPGELRTRAARLYEFSDVSEAESTLEQLQQRDDGPFVVRLAREAGKRESRYRHLFSGDASDAAPEEEGAGDNSHQLTERVETLEKEVAELKRQLAALLA.

Residues 168-188 (SGDASDAAPEEEGAGDNSHQL) form a disordered region.

This sequence belongs to the UPF0502 family.

The sequence is that of UPF0502 protein PC1_1804 from Pectobacterium carotovorum subsp. carotovorum (strain PC1).